Reading from the N-terminus, the 401-residue chain is Phosphoglycerate kinase (401 aa).

Residues Asp-20–Asn-22, Arg-35, His-58–Arg-61, Arg-117, and Arg-154 contribute to the substrate site. ATP is bound by residues Lys-204, Gly-298, Glu-329, and Gly-358–Ser-361.

This sequence belongs to the phosphoglycerate kinase family. In terms of assembly, monomer.

The protein localises to the cytoplasm. It carries out the reaction (2R)-3-phosphoglycerate + ATP = (2R)-3-phospho-glyceroyl phosphate + ADP. The protein operates within carbohydrate degradation; glycolysis; pyruvate from D-glyceraldehyde 3-phosphate: step 2/5. The chain is Phosphoglycerate kinase from Bifidobacterium longum (strain DJO10A).